The following is a 383-amino-acid chain: 1-deoxy-D-xylulose 5-phosphate reductoisomerase (383 aa).

NADPH-binding residues include Thr-10, Gly-11, Ser-12, Ile-13, Gly-36, Lys-37, Asn-38, and Asn-122. A 1-deoxy-D-xylulose 5-phosphate-binding site is contributed by Lys-123. Glu-124 lines the NADPH pocket. Position 148 (Asp-148) interacts with Mn(2+). 1-deoxy-D-xylulose 5-phosphate-binding residues include Ser-149, Glu-150, Ser-174, and His-197. Glu-150 provides a ligand contact to Mn(2+). Gly-203 lines the NADPH pocket. 1-deoxy-D-xylulose 5-phosphate is bound by residues Ser-210, Asn-215, Lys-216, and Glu-219. Glu-219 contacts Mn(2+).

The protein belongs to the DXR family. Requires Mg(2+) as cofactor. The cofactor is Mn(2+).

It carries out the reaction 2-C-methyl-D-erythritol 4-phosphate + NADP(+) = 1-deoxy-D-xylulose 5-phosphate + NADPH + H(+). The protein operates within isoprenoid biosynthesis; isopentenyl diphosphate biosynthesis via DXP pathway; isopentenyl diphosphate from 1-deoxy-D-xylulose 5-phosphate: step 1/6. In terms of biological role, catalyzes the NADPH-dependent rearrangement and reduction of 1-deoxy-D-xylulose-5-phosphate (DXP) to 2-C-methyl-D-erythritol 4-phosphate (MEP). The polypeptide is 1-deoxy-D-xylulose 5-phosphate reductoisomerase (Bacillus velezensis (strain DSM 23117 / BGSC 10A6 / LMG 26770 / FZB42) (Bacillus amyloliquefaciens subsp. plantarum)).